A 294-amino-acid polypeptide reads, in one-letter code: Endonuclease G, mitochondrial (294 aa).

The N-terminal 44 residues, methionine 1–alanine 44, are a transit peptide targeting the mitochondrion. Threonine 125 bears the Phosphothreonine mark. The active-site Proton acceptor is histidine 138. Asparagine 169 contacts Mg(2+). The essential for deoxyribonuclease activity stretch occupies residues alanine 283–serine 293.

It belongs to the DNA/RNA non-specific endonuclease family. In terms of assembly, homodimer; disulfide-linked. Homodimerization is essential for its activity. Interacts with YWHAG. It depends on Mg(2+) as a cofactor. Post-translationally, GSK3-beta-mediated phosphorylation at Thr-125 is necessary for its interaction with YWHAG and the induction of autophagy.

The protein resides in the mitochondrion. Endonuclease that preferentially catalyzes the cleavage of double-stranded 5-hydroxymethylcytosine (5hmC)-modified DNA. The 5hmC-modified nucleotide does not increase the binding affinity, but instead increases the efficiency of cutting and specifies the site of cleavage for the modified DNAs. Shows significantly higher affinity for four-stranded Holliday junction over duplex and single-stranded DNAs. Promotes conservative recombination when the DNA is 5hmC-modified. Promotes autophagy through the suppression of mTOR by its phosphorylation-mediated interaction with YWHAG and its endonuclease activity-mediated DNA damage response. GSK3-beta mediated phosphorylation of ENDOG enhances its interaction with YWHAG, leading to the release of TSC2 and PIK3C3 from YWHAG resulting in mTOR pathway suppression and autophagy initiation. Promotes cleavage of mtDNA in response to oxidative and nitrosative stress, in turn inducing compensatory mtDNA replication. This Mus musculus (Mouse) protein is Endonuclease G, mitochondrial (Endog).